The chain runs to 367 residues: rRNA processing protein RCL1 (367 aa).

Ser2 is modified (N-acetylserine).

It belongs to the RNA 3'-terminal cyclase family. Type 2 subfamily. In terms of assembly, interacts directly with BMS1 and the U3 snoRNA to form a stable subcomplex. Component of the 90S small subunit processome also known as 90S pre-ribosome that consists of the 35S pre-rRNA, early-associating ribosomal proteins most of which are part of the small ribosomal subunit, the U3 snoRNA and associated proteins.

The protein localises to the nucleus. The protein resides in the nucleolus. In terms of biological role, does not have cyclase activity. Plays a role in 40S-ribosomal-subunit biogenesis in the early pre-rRNA processing steps at sites A0, A1 and A2 that are required for proper maturation of the 18S RNA. RCL1 activates BMS1 by promoting GDP/GTP exchange. This is rRNA processing protein RCL1 (RCL1) from Saccharomyces cerevisiae (strain ATCC 204508 / S288c) (Baker's yeast).